We begin with the raw amino-acid sequence, 337 residues long: Ketol-acid reductoisomerase (NADP(+)) (337 aa).

In terms of domain architecture, KARI N-terminal Rossmann spans 3–183 (IELLYDADAD…GGARAGVIPT (181 aa)). Residues 26–29 (YGSQ), arginine 49, serine 52, serine 54, and 84–87 (DTSQ) contribute to the NADP(+) site. The active site involves histidine 109. Glycine 135 contacts NADP(+). Positions 184–329 (TFREETETDL…SKLRDLMSWV (146 aa)) constitute a KARI C-terminal knotted domain. Mg(2+) contacts are provided by aspartate 192, glutamate 196, glutamate 228, and glutamate 232. Serine 253 contributes to the substrate binding site.

The protein belongs to the ketol-acid reductoisomerase family. Mg(2+) serves as cofactor.

It carries out the reaction (2R)-2,3-dihydroxy-3-methylbutanoate + NADP(+) = (2S)-2-acetolactate + NADPH + H(+). The enzyme catalyses (2R,3R)-2,3-dihydroxy-3-methylpentanoate + NADP(+) = (S)-2-ethyl-2-hydroxy-3-oxobutanoate + NADPH + H(+). Its pathway is amino-acid biosynthesis; L-isoleucine biosynthesis; L-isoleucine from 2-oxobutanoate: step 2/4. The protein operates within amino-acid biosynthesis; L-valine biosynthesis; L-valine from pyruvate: step 2/4. Functionally, involved in the biosynthesis of branched-chain amino acids (BCAA). Catalyzes an alkyl-migration followed by a ketol-acid reduction of (S)-2-acetolactate (S2AL) to yield (R)-2,3-dihydroxy-isovalerate. In the isomerase reaction, S2AL is rearranged via a Mg-dependent methyl migration to produce 3-hydroxy-3-methyl-2-ketobutyrate (HMKB). In the reductase reaction, this 2-ketoacid undergoes a metal-dependent reduction by NADPH to yield (R)-2,3-dihydroxy-isovalerate. The chain is Ketol-acid reductoisomerase (NADP(+)) from Corynebacterium diphtheriae (strain ATCC 700971 / NCTC 13129 / Biotype gravis).